The chain runs to 279 residues: Nitrate import permease protein NrtB (279 aa).

Residues 86–270 enclose the ABC transmembrane type-1 domain; that stretch reads IAASLQRVAV…LLNALVGFIA (185 aa). 6 helical membrane passes run 98 to 118, 124 to 144, 151 to 171, 196 to 216, 217 to 237, and 249 to 269; these read LMAA…VLMF, IFQV…LAAF, AIFV…AVGV, VLLP…IGLS, WLAI…FFIW, and ILAI…VGFI.

It belongs to the binding-protein-dependent transport system permease family. CysTW subfamily. In terms of assembly, the complex is composed of two ATP-binding proteins (NrtC and NrtD), two transmembrane proteins (NrtB) and a solute-binding protein (NrtA).

It localises to the cell inner membrane. Its function is as follows. Part of the ABC transporter complex NrtABCD involved in nitrate uptake. The complex is probably also involved in nitrite transport. Probably responsible for the translocation of the substrate across the membrane. This chain is Nitrate import permease protein NrtB, found in Leptolyngbya laminosa (Phormidium laminosum).